Reading from the N-terminus, the 101-residue chain is Small ribosomal subunit protein uS14 (101 aa).

Belongs to the universal ribosomal protein uS14 family. As to quaternary structure, part of the 30S ribosomal subunit. Contacts proteins S3 and S10.

Its function is as follows. Binds 16S rRNA, required for the assembly of 30S particles and may also be responsible for determining the conformation of the 16S rRNA at the A site. The chain is Small ribosomal subunit protein uS14 from Chlamydia muridarum (strain MoPn / Nigg).